The sequence spans 824 residues: Glycerol-3-phosphate acyltransferase (824 aa).

Residues 302–307 carry the HXXXXD motif motif; that stretch reads CHRSHM.

The protein belongs to the GPAT/DAPAT family.

It localises to the cell inner membrane. The enzyme catalyses sn-glycerol 3-phosphate + an acyl-CoA = a 1-acyl-sn-glycero-3-phosphate + CoA. It functions in the pathway phospholipid metabolism; CDP-diacylglycerol biosynthesis; CDP-diacylglycerol from sn-glycerol 3-phosphate: step 1/3. This is Glycerol-3-phosphate acyltransferase from Actinobacillus pleuropneumoniae serotype 7 (strain AP76).